The sequence spans 431 residues: Glucose-1-phosphate adenylyltransferase (431 aa).

Lys39 contacts beta-D-fructose 1,6-bisphosphate. Residues Arg40, His46, and Arg52 each coordinate AMP. Alpha-D-glucose 1-phosphate-binding positions include Tyr114, Gly179, Glu194 to Lys195, and Ser212. Glu370 and Arg386 together coordinate AMP. Residues Arg419–Arg423 and Gln429–Arg431 contribute to the beta-D-fructose 1,6-bisphosphate site.

It belongs to the bacterial/plant glucose-1-phosphate adenylyltransferase family. Homotetramer.

It carries out the reaction alpha-D-glucose 1-phosphate + ATP + H(+) = ADP-alpha-D-glucose + diphosphate. It participates in glycan biosynthesis; glycogen biosynthesis. Allosterically activated by fructose-1,6-bisphosphate (F16BP) and inhibited by AMP. Its function is as follows. Involved in the biosynthesis of ADP-glucose, a building block required for the elongation reactions to produce glycogen. Catalyzes the reaction between ATP and alpha-D-glucose 1-phosphate (G1P) to produce pyrophosphate and ADP-Glc. In Salmonella typhi, this protein is Glucose-1-phosphate adenylyltransferase.